The sequence spans 416 residues: Serine hydroxymethyltransferase (416 aa).

(6S)-5,6,7,8-tetrahydrofolate contacts are provided by residues Leu121 and 125-127; that span reads GHL. Lys229 carries the N6-(pyridoxal phosphate)lysine modification. (6S)-5,6,7,8-tetrahydrofolate is bound by residues Glu245 and 354 to 356; that span reads SPF.

This sequence belongs to the SHMT family. As to quaternary structure, homodimer. Pyridoxal 5'-phosphate serves as cofactor.

It is found in the cytoplasm. The catalysed reaction is (6R)-5,10-methylene-5,6,7,8-tetrahydrofolate + glycine + H2O = (6S)-5,6,7,8-tetrahydrofolate + L-serine. It functions in the pathway one-carbon metabolism; tetrahydrofolate interconversion. Its pathway is amino-acid biosynthesis; glycine biosynthesis; glycine from L-serine: step 1/1. In terms of biological role, catalyzes the reversible interconversion of serine and glycine with tetrahydrofolate (THF) serving as the one-carbon carrier. This reaction serves as the major source of one-carbon groups required for the biosynthesis of purines, thymidylate, methionine, and other important biomolecules. Also exhibits THF-independent aldolase activity toward beta-hydroxyamino acids, producing glycine and aldehydes, via a retro-aldol mechanism. This is Serine hydroxymethyltransferase from Aliivibrio fischeri (strain ATCC 700601 / ES114) (Vibrio fischeri).